A 616-amino-acid polypeptide reads, in one-letter code: Protein decapentaplegic (616 aa).

Residues 1 to 23 (MRAWILLLAVLATSQPIVQVAST) form the signal peptide. Residues 24 to 474 (EDTSISQRFI…DGRHKARSIR (451 aa)) constitute a propeptide that is removed on maturation. The segment at 80–188 (SDSDSDNNNN…TSTESHQSPI (109 aa)) is disordered. Positions 86–105 (NNNNNYKNRNNNNNNLNKGP) are enriched in low complexity. The segment covering 106-115 (RNNKNKGNKH) has biased composition (basic residues). Residues 116–139 (SKSDANRQFNEVHKPRTDQLENSK) are compositionally biased toward basic and acidic residues. Asn147 carries an N-linked (GlcNAc...) asparagine glycan. Residues 173-188 (ATTTALTSTESHQSPI) are compositionally biased toward polar residues. N-linked (GlcNAc...) asparagine glycans are attached at residues Asn360 and Asn395. A disordered region spans residues 470-512 (ARSIRDVSGGGGGGGGAGEGGKGNGGGRNRRHQRRPARRKNHE). A compositionally biased stretch (gly residues) spans 477–496 (SGGGGGGGGAGEGGKGNGGG). Over residues 497–509 (RNRRHQRRPARRK) the composition is skewed to basic residues. 3 cysteine pairs are disulfide-bonded: Cys515-Cys581, Cys544-Cys613, and Cys548-Cys615. Asn557 carries N-linked (GlcNAc...) asparagine glycosylation.

It belongs to the TGF-beta family. Heterodimers of scw/dpp are the active subunit, dpp/dpp homodimers elicit a basal response and scw/scw homodimers alone are ineffective in specifying a dorsal pattern. In terms of tissue distribution, expressed in the imaginal discs associated with establishment of the proximal-distal axis of the appendages, and midgut mesoderm.

The protein resides in the secreted. Acts as an extracellular morphogen to establish at least two cellular response thresholds within the dorsal half of the drosophila embryo. Required for the proper development of the embryonic dorsal hypoderm, for viability of larvae and for cell viability of the epithelial cells in the imaginal disks. Acts together with scw. The chain is Protein decapentaplegic (dpp) from Drosophila pseudoobscura pseudoobscura (Fruit fly).